The sequence spans 361 residues: Tyrosine--tRNA ligase (361 aa).

Residues Tyr36, Tyr162, Gln166, Asp169, and Gln184 each coordinate L-tyrosine. The short motif at 236–240 (KMSKS) is the 'KMSKS' region element. Residue Lys239 participates in ATP binding.

The protein belongs to the class-I aminoacyl-tRNA synthetase family. TyrS type 4 subfamily. In terms of assembly, homodimer.

The protein localises to the cytoplasm. It carries out the reaction tRNA(Tyr) + L-tyrosine + ATP = L-tyrosyl-tRNA(Tyr) + AMP + diphosphate + H(+). Catalyzes the attachment of tyrosine to tRNA(Tyr) in a two-step reaction: tyrosine is first activated by ATP to form Tyr-AMP and then transferred to the acceptor end of tRNA(Tyr). The chain is Tyrosine--tRNA ligase from Saccharolobus islandicus (strain M.14.25 / Kamchatka #1) (Sulfolobus islandicus).